Here is a 153-residue protein sequence, read N- to C-terminus: Small ribosomal subunit protein uS12m (153 aa).

A mitochondrion-targeting transit peptide spans 1–20 (MLSRFMSNTWCTPLRQAQRL).

Belongs to the universal ribosomal protein uS12 family. As to quaternary structure, component of the mitochondrial small ribosomal subunit (mt-SSU). Mature yeast 74S mitochondrial ribosomes consist of a small (37S) and a large (54S) subunit. The 37S small subunit contains a 15S ribosomal RNA (15S mt-rRNA) and 34 different proteins. The 54S large subunit contains a 21S rRNA (21S mt-rRNA) and 46 different proteins. uS12m forms part of the decoding center of the mt-SSU.

The protein resides in the mitochondrion. Functionally, component of the mitochondrial ribosome (mitoribosome), a dedicated translation machinery responsible for the synthesis of mitochondrial genome-encoded proteins, including at least some of the essential transmembrane subunits of the mitochondrial respiratory chain. The mitoribosomes are attached to the mitochondrial inner membrane and translation products are cotranslationally integrated into the membrane. uS12m is required for respiratory growth. This is Small ribosomal subunit protein uS12m (MRPS12) from Saccharomyces cerevisiae (strain ATCC 204508 / S288c) (Baker's yeast).